The sequence spans 287 residues: 26S proteasome non-ATPase regulatory subunit 8 (287 aa).

S43 carries the post-translational modification Phosphoserine. The 170-residue stretch at 99–268 folds into the PCI domain; it reads PSFERYMAQL…QQKPEDTTIP (170 aa). K234 is covalently cross-linked (Glycyl lysine isopeptide (Lys-Gly) (interchain with G-Cter in SUMO2)).

It belongs to the proteasome subunit S14 family. As to quaternary structure, component of the 19S proteasome regulatory particle complex. The 26S proteasome consists of a 20S core particle (CP) and two 19S regulatory subunits (RP). The regulatory particle is made of a lid composed of 9 subunits including PSMD8, a base containing 6 ATPases and few additional components. Interacts with DDI2. Interacts with TASOR.

In terms of biological role, component of the 26S proteasome, a multiprotein complex involved in the ATP-dependent degradation of ubiquitinated proteins. This complex plays a key role in the maintenance of protein homeostasis by removing misfolded or damaged proteins, which could impair cellular functions, and by removing proteins whose functions are no longer required. Therefore, the proteasome participates in numerous cellular processes, including cell cycle progression, apoptosis, or DNA damage repair. The sequence is that of 26S proteasome non-ATPase regulatory subunit 8 (PSMD8) from Bos taurus (Bovine).